Reading from the N-terminus, the 663-residue chain is General transcription and DNA repair factor IIH subunit tcf-29 (663 aa).

2 BSD domains span residues 147–206 (WFED…RAYA) and 227–278 (ENGE…LSKK). 2 disordered regions span residues 452–491 (DSDGRGGIDLHRSIGVDPDSDDEGNNSLDSKSGPKPQHVG) and 513–535 (HLTTTTTHGGSHTTTTNASEERP). Positions 453 to 465 (SDGRGGIDLHRSI) are enriched in basic and acidic residues. Low complexity predominate over residues 515–528 (TTTTTHGGSHTTTT).

It belongs to the TFB1 family. Component of the 7-subunit TFIIH core complex composed of XPB/rad25, XPD/dnr-10, tcf-30/SSL1, tcf-29/TFB1, tcf-11/TFB2, tcf-14/TFB4 and rtf-1/TFB5, which is active in NER. The core complex associates with the 3-subunit CTD-kinase module TFIIK composed of div-66/cyclin H, prk-3/KIN28 and rtf-2/TFB3 to form the 10-subunit holoenzyme (holo-TFIIH) active in transcription.

The protein resides in the nucleus. Its function is as follows. Component of the general transcription and DNA repair factor IIH (TFIIH) core complex, which is involved in general and transcription-coupled nucleotide excision repair (NER) of damaged DNA and, when complexed to TFIIK, in RNA transcription by RNA polymerase II. In NER, TFIIH acts by opening DNA around the lesion to allow the excision of the damaged oligonucleotide and its replacement by a new DNA fragment. In transcription, TFIIH has an essential role in transcription initiation. When the pre-initiation complex (PIC) has been established, TFIIH is required for promoter opening and promoter escape. Phosphorylation of the C-terminal tail (CTD) of the largest subunit of RNA polymerase II by the kinase module TFIIK controls the initiation of transcription. This Neurospora crassa (strain ATCC 24698 / 74-OR23-1A / CBS 708.71 / DSM 1257 / FGSC 987) protein is General transcription and DNA repair factor IIH subunit tcf-29 (tcf-29).